We begin with the raw amino-acid sequence, 146 residues long: Hemoglobin subunit beta (146 aa).

The residue at position 1 (V1) is an N-acetylvaline. The 145-residue stretch at 2–146 (HLTDAEKALV…VATALAHKYH (145 aa)) folds into the Globin domain. T12 carries the phosphothreonine modification. S44 carries the phosphoserine modification. K59 is modified (N6-acetyllysine). Residue H63 coordinates heme b. The residue at position 82 (K82) is an N6-acetyllysine. H92 is a binding site for heme b. At C93 the chain carries S-nitrosocysteine. K144 carries the post-translational modification N6-acetyllysine.

Belongs to the globin family. Heterotetramer of two alpha chains and two beta chains. As to expression, red blood cells.

Involved in oxygen transport from the lung to the various peripheral tissues. The sequence is that of Hemoglobin subunit beta from Peromyscus crinitus (Canyon mouse).